The sequence spans 122 residues: uncharacterized protein (122 aa).

Positions 1 to 17 are cleaved as a signal peptide; the sequence is MKYSSIFSMLSFFILFA.

This is an uncharacterized protein from Escherichia coli (strain K12).